A 227-amino-acid chain; its full sequence is Cytochrome c oxidase subunit 2 (227 aa).

The Mitochondrial intermembrane portion of the chain corresponds to 1–14 (MAYPFQLGFQDATS). Residues 15–45 (PIMEELLHFHDHTLMIVFLISSLVLYIISLM) form a helical membrane-spanning segment. At 46–59 (LTTKLTHTSTMDAQ) the chain is on the mitochondrial matrix side. The chain crosses the membrane as a helical span at residues 60–87 (EVETIWTILPAIILILIALPSLRILYMM). The Mitochondrial intermembrane segment spans residues 88 to 227 (DEINNPSLTV…YFEKWSASML (140 aa)). Cu cation is bound by residues H161, C196, E198, C200, H204, and M207. Mg(2+) is bound at residue E198. Residue Y218 is modified to Phosphotyrosine.

Belongs to the cytochrome c oxidase subunit 2 family. In terms of assembly, component of the cytochrome c oxidase (complex IV, CIV), a multisubunit enzyme composed of 14 subunits. The complex is composed of a catalytic core of 3 subunits MT-CO1, MT-CO2 and MT-CO3, encoded in the mitochondrial DNA, and 11 supernumerary subunits COX4I, COX5A, COX5B, COX6A, COX6B, COX6C, COX7A, COX7B, COX7C, COX8 and NDUFA4, which are encoded in the nuclear genome. The complex exists as a monomer or a dimer and forms supercomplexes (SCs) in the inner mitochondrial membrane with NADH-ubiquinone oxidoreductase (complex I, CI) and ubiquinol-cytochrome c oxidoreductase (cytochrome b-c1 complex, complex III, CIII), resulting in different assemblies (supercomplex SCI(1)III(2)IV(1) and megacomplex MCI(2)III(2)IV(2)). Found in a complex with TMEM177, COA6, COX18, COX20, SCO1 and SCO2. Interacts with TMEM177 in a COX20-dependent manner. Interacts with COX20. Interacts with COX16. It depends on Cu cation as a cofactor.

It is found in the mitochondrion inner membrane. The enzyme catalyses 4 Fe(II)-[cytochrome c] + O2 + 8 H(+)(in) = 4 Fe(III)-[cytochrome c] + 2 H2O + 4 H(+)(out). Functionally, component of the cytochrome c oxidase, the last enzyme in the mitochondrial electron transport chain which drives oxidative phosphorylation. The respiratory chain contains 3 multisubunit complexes succinate dehydrogenase (complex II, CII), ubiquinol-cytochrome c oxidoreductase (cytochrome b-c1 complex, complex III, CIII) and cytochrome c oxidase (complex IV, CIV), that cooperate to transfer electrons derived from NADH and succinate to molecular oxygen, creating an electrochemical gradient over the inner membrane that drives transmembrane transport and the ATP synthase. Cytochrome c oxidase is the component of the respiratory chain that catalyzes the reduction of oxygen to water. Electrons originating from reduced cytochrome c in the intermembrane space (IMS) are transferred via the dinuclear copper A center (CU(A)) of subunit 2 and heme A of subunit 1 to the active site in subunit 1, a binuclear center (BNC) formed by heme A3 and copper B (CU(B)). The BNC reduces molecular oxygen to 2 water molecules using 4 electrons from cytochrome c in the IMS and 4 protons from the mitochondrial matrix. The protein is Cytochrome c oxidase subunit 2 (MT-CO2) of Felis catus (Cat).